Here is a 369-residue protein sequence, read N- to C-terminus: Actin-related protein T3 (369 aa).

This sequence belongs to the actin family. In terms of assembly, interacts with PFN3. In terms of tissue distribution, testis specific (at protein level). Expressed specifically in haploid germ cells.

Its subcellular location is the cytoplasm. It localises to the cytoskeleton. It is found in the nucleus. The chain is Actin-related protein T3 (Actrt3) from Mus musculus (Mouse).